A 181-amino-acid chain; its full sequence is Oligoribonuclease (181 aa).

An Exonuclease domain is found at 8-171 (LIWIDLEMTG…DDIRESIAEL (164 aa)). Tyr129 is a catalytic residue.

It belongs to the oligoribonuclease family.

It localises to the cytoplasm. Its function is as follows. 3'-to-5' exoribonuclease specific for small oligoribonucleotides. This chain is Oligoribonuclease, found in Vibrio vulnificus (strain CMCP6).